We begin with the raw amino-acid sequence, 189 residues long: uncharacterized protein (189 aa).

Residues 1-174 (MKCWTLGDRV…GMEKGVREAL (174 aa)) enclose the Macro domain.

This is an uncharacterized protein from Aeropyrum pernix (strain ATCC 700893 / DSM 11879 / JCM 9820 / NBRC 100138 / K1).